A 238-amino-acid polypeptide reads, in one-letter code: Large ribosomal subunit protein uL2 (238 aa).

Residues 197-219 (ASDHPFGGKRHSNHSKPFTVSKW) are disordered.

This sequence belongs to the universal ribosomal protein uL2 family. In terms of assembly, part of the 50S ribosomal subunit. Forms a bridge to the 30S subunit in the 70S ribosome.

Its function is as follows. One of the primary rRNA binding proteins. Required for association of the 30S and 50S subunits to form the 70S ribosome, for tRNA binding and peptide bond formation. It has been suggested to have peptidyltransferase activity; this is somewhat controversial. Makes several contacts with the 16S rRNA in the 70S ribosome. In Nanoarchaeum equitans (strain Kin4-M), this protein is Large ribosomal subunit protein uL2.